The chain runs to 492 residues: N-succinylglutamate 5-semialdehyde dehydrogenase (492 aa).

NAD(+) is bound at residue 220–225 (GSANTG). Active-site residues include glutamate 243 and cysteine 277.

This sequence belongs to the aldehyde dehydrogenase family. AstD subfamily.

The enzyme catalyses N-succinyl-L-glutamate 5-semialdehyde + NAD(+) + H2O = N-succinyl-L-glutamate + NADH + 2 H(+). It functions in the pathway amino-acid degradation; L-arginine degradation via AST pathway; L-glutamate and succinate from L-arginine: step 4/5. Its function is as follows. Catalyzes the NAD-dependent reduction of succinylglutamate semialdehyde into succinylglutamate. In Escherichia coli (strain UTI89 / UPEC), this protein is N-succinylglutamate 5-semialdehyde dehydrogenase.